The chain runs to 323 residues: Methenyltetrahydromethanopterin cyclohydrolase (323 aa).

It belongs to the MCH family.

It localises to the cytoplasm. It carries out the reaction 5,10-methenyl-5,6,7,8-tetrahydromethanopterin + H2O = N(5)-formyl-5,6,7,8-tetrahydromethanopterin + H(+). It participates in one-carbon metabolism; methanogenesis from CO(2); 5,10-methenyl-5,6,7,8-tetrahydromethanopterin from CO(2): step 3/3. Catalyzes the reversible interconversion of 5-formyl-H(4)MPT to methenyl-H(4)MPT(+). The chain is Methenyltetrahydromethanopterin cyclohydrolase from Methanococcus maripaludis (strain C7 / ATCC BAA-1331).